The chain runs to 1829 residues: Sodium channel protein type 4 subunit alpha A (1829 aa).

Over M1–S124 the chain is Cytoplasmic. The disordered stretch occupies residues S32–E52. An I repeat occupies C106–N421. Residues L125–M143 traverse the membrane as a helical segment. Residues S144 to S150 lie on the Extracellular side of the membrane. Residues K151–S171 form a helical membrane-spanning segment. The Cytoplasmic portion of the chain corresponds to R172–P185. A helical transmembrane segment spans residues W186–V203. Residues D204 to S209 lie on the Extracellular side of the membrane. N207 carries an N-linked (GlcNAc...) asparagine glycan. A helical transmembrane segment spans residues A210–I226. The Cytoplasmic portion of the chain corresponds to P227 to D245. Residues V246 to F265 traverse the membrane as a helical segment. Over M266–N358 the chain is Extracellular. An intrachain disulfide couples C273 to C327. 3 N-linked (GlcNAc...) asparagine glycosylation sites follow: N280, N293, and N329. A disulfide bridge connects residues C336 and C342. The pore-forming intramembrane region spans F359 to L383. The Extracellular segment spans residues R384–Y390. Residues M391 to A411 form a helical membrane-spanning segment. Residues V412 to P582 lie on the Cytoplasmic side of the membrane. Over residues E446–G467 the composition is skewed to polar residues. The disordered stretch occupies residues E446 to S468. One copy of the II repeat lies at C564–G836. The helical transmembrane segment at F583–M601 threads the bilayer. Topologically, residues E602–H612 are extracellular. Residues V613–K632 traverse the membrane as a helical segment. Residues L633 to W646 lie on the Cytoplasmic side of the membrane. Residues N647 to V666 form a helical membrane-spanning segment. Topologically, residues Q667–G668 are extracellular. The helical transmembrane segment at L669 to S686 threads the bilayer. Topologically, residues W687 to G702 are cytoplasmic. The helical transmembrane segment at A703–V721 threads the bilayer. Over G722–D750 the chain is Extracellular. C735 and C741 are oxidised to a cystine. Residues F751–W771 constitute an intramembrane region (pore-forming). At D772–C782 the chain is on the extracellular side. C773 and C782 are joined by a disulfide. A helical membrane pass occupies residues L783–F801. At L802 to Y998 the chain is on the cytoplasmic side. The tract at residues S901–E957 is disordered. Over residues D902–D916 the composition is skewed to acidic residues. A compositionally biased stretch (polar residues) spans D923–D933. Residues P939–E957 show a composition bias toward acidic residues. The III repeat unit spans residues W979–L1292. Residues F999–F1016 traverse the membrane as a helical segment. Over E1017 to T1029 the chain is Extracellular. Residues I1030 to L1048 traverse the membrane as a helical segment. Residues K1049 to A1062 are Cytoplasmic-facing. A helical membrane pass occupies residues W1063 to N1081. The Extracellular portion of the chain corresponds to L1082–G1089. A helical membrane pass occupies residues A1090–R1108. Residues F1109–S1125 are Cytoplasmic-facing. Residues I1126 to V1145 form a helical membrane-spanning segment. The Extracellular segment spans residues N1146 to V1196. C1155 and C1175 are joined by a disulfide. N-linked (GlcNAc...) asparagine glycans are attached at residues N1157 and N1171. Positions G1197 to A1218 form an intramembrane region, pore-forming. Residues A1219–L1235 lie on the Extracellular side of the membrane. The chain crosses the membrane as a helical span at residues Y1236 to I1257. Residues G1258 to F1320 are Cytoplasmic-facing. The interval I1276–M1278 is important for rapid channel inactivation. One copy of the IV repeat lies at I1301–Q1599. Residues F1321–I1338 form a helical membrane-spanning segment. Residues E1339–Y1349 are Extracellular-facing. Residues V1350–L1368 form a helical membrane-spanning segment. The Cytoplasmic portion of the chain corresponds to K1369–I1380. Residues G1381 to M1398 form a helical membrane-spanning segment. The Extracellular segment spans residues L1399–T1411. A helical membrane pass occupies residues L1412–I1428. Residues R1429–A1447 lie on the Cytoplasmic side of the membrane. The helical transmembrane segment at L1448 to F1465 threads the bilayer. The Extracellular segment spans residues G1466 to T1487. Residues F1488 to P1510 constitute an intramembrane region (pore-forming). The Extracellular portion of the chain corresponds to I1511–G1540. The cysteines at positions 1519 and 1534 are disulfide-linked. A helical transmembrane segment spans residues I1541–I1563. The Cytoplasmic portion of the chain corresponds to L1564 to V1829. An IQ domain is found at E1693 to S1722. Residues P1765–T1786 are disordered.

The protein belongs to the sodium channel (TC 1.A.1.10) family. Nav1.4/SCN4A subfamily. In terms of assembly, voltage-gated sodium (Nav) channels consist of an ion-conducting alpha subunit which is functional on its own associated with regulatory beta subunits. In terms of tissue distribution, expressed in skeletal muscle, brain, spinal cord, and eye.

The protein resides in the cell membrane. The catalysed reaction is Na(+)(in) = Na(+)(out). Pore-forming subunit of a voltage-gated sodium (Nav) channel that directly mediates the depolarizing phase of action potentials in excitable membranes. Navs, also called VGSCs (voltage-gated sodium channels) or VDSCs (voltage-dependent sodium channels), operate by switching between closed and open conformations depending on the voltage difference across the membrane. In the open conformation they allow Na(+) ions to selectively pass through the pore, along their electrochemical gradient. The influx of Na+ ions provokes membrane depolarization, initiating the propagation of electrical signals throughout cells and tissues. The sequence is that of Sodium channel protein type 4 subunit alpha A (scn4aa) from Danio rerio (Zebrafish).